A 205-amino-acid chain; its full sequence is Guanylate kinase (205 aa).

The Guanylate kinase-like domain occupies 7–185 (GNIFIISAAS…AEEDLRHIVN (179 aa)). Position 14-21 (14-21 (AASGTGKT)) interacts with ATP.

The protein belongs to the guanylate kinase family.

Its subcellular location is the cytoplasm. It catalyses the reaction GMP + ATP = GDP + ADP. Functionally, essential for recycling GMP and indirectly, cGMP. The sequence is that of Guanylate kinase (gmk) from Neisseria meningitidis serogroup A / serotype 4A (strain DSM 15465 / Z2491).